A 200-amino-acid chain; its full sequence is Imidazoleglycerol-phosphate dehydratase (200 aa).

The protein belongs to the imidazoleglycerol-phosphate dehydratase family.

It is found in the cytoplasm. The enzyme catalyses D-erythro-1-(imidazol-4-yl)glycerol 3-phosphate = 3-(imidazol-4-yl)-2-oxopropyl phosphate + H2O. The protein operates within amino-acid biosynthesis; L-histidine biosynthesis; L-histidine from 5-phospho-alpha-D-ribose 1-diphosphate: step 6/9. This Bifidobacterium animalis subsp. lactis (strain AD011) protein is Imidazoleglycerol-phosphate dehydratase.